The chain runs to 217 residues: Probable transaldolase (217 aa).

K85 functions as the Schiff-base intermediate with substrate in the catalytic mechanism.

The protein belongs to the transaldolase family. Type 3B subfamily.

It is found in the cytoplasm. The catalysed reaction is D-sedoheptulose 7-phosphate + D-glyceraldehyde 3-phosphate = D-erythrose 4-phosphate + beta-D-fructose 6-phosphate. It participates in carbohydrate degradation; pentose phosphate pathway; D-glyceraldehyde 3-phosphate and beta-D-fructose 6-phosphate from D-ribose 5-phosphate and D-xylulose 5-phosphate (non-oxidative stage): step 2/3. Transaldolase is important for the balance of metabolites in the pentose-phosphate pathway. The chain is Probable transaldolase from Agathobacter rectalis (strain ATCC 33656 / DSM 3377 / JCM 17463 / KCTC 5835 / VPI 0990) (Eubacterium rectale).